The chain runs to 273 residues: Transmembrane protein 45A (273 aa).

The next 5 helical transmembrane spans lie at alanine 8–leucine 27, valine 55–leucine 79, isoleucine 108–valine 131, leucine 153–valine 171, and methionine 217–valine 236.

The protein belongs to the TMEM45 family.

It is found in the membrane. In Mus musculus (Mouse), this protein is Transmembrane protein 45A (Tmem45a).